The following is a 264-amino-acid chain: uncharacterized protein (264 aa).

13–20 contacts NADP(+); that stretch reads TGSTSGIG. S141 lines the substrate pocket. Y154 serves as the catalytic Proton acceptor.

This sequence belongs to the short-chain dehydrogenases/reductases (SDR) family.

This is an uncharacterized protein from Bacillus subtilis (strain 168).